The sequence spans 585 residues: Urease subunit alpha (585 aa).

Residues 132–585 (GGIDTHIHFI…LPMAQRYFLF (454 aa)) form the Urease domain. The Ni(2+) site is built by His-137, His-139, and Lys-220. Lys-220 is subject to N6-carboxylysine. His-222 is a binding site for substrate. Ni(2+) contacts are provided by His-249 and His-275. The active-site Proton donor is the His-323. Asp-363 contributes to the Ni(2+) binding site.

This sequence belongs to the metallo-dependent hydrolases superfamily. Urease alpha subunit family. As to quaternary structure, heterotrimer of UreA (gamma), UreB (beta) and UreC (alpha) subunits. Three heterotrimers associate to form the active enzyme. Ni cation serves as cofactor. Carboxylation allows a single lysine to coordinate two nickel ions.

The protein localises to the cytoplasm. The enzyme catalyses urea + 2 H2O + H(+) = hydrogencarbonate + 2 NH4(+). It functions in the pathway nitrogen metabolism; urea degradation; CO(2) and NH(3) from urea (urease route): step 1/1. The sequence is that of Urease subunit alpha from Pseudarthrobacter chlorophenolicus (strain ATCC 700700 / DSM 12829 / CIP 107037 / JCM 12360 / KCTC 9906 / NCIMB 13794 / A6) (Arthrobacter chlorophenolicus).